Consider the following 571-residue polypeptide: Potassium-transporting ATPase potassium-binding subunit (571 aa).

10 consecutive transmembrane segments (helical) span residues 7 to 27 (LQFA…GGYL), 66 to 86 (TYAL…YGIA), 137 to 157 (GLAV…AALI), 188 to 208 (FVVA…GFIV), 255 to 275 (IGNF…CFAF), 286 to 306 (WAVL…AMSF), 390 to 410 (VGLN…GLMV), 430 to 450 (TLYI…SVLI), 497 to 517 (IGVA…AIAG), and 538 to 558 (LFVG…FFPA).

Belongs to the KdpA family. As to quaternary structure, the system is composed of three essential subunits: KdpA, KdpB and KdpC.

The protein resides in the cell membrane. Part of the high-affinity ATP-driven potassium transport (or Kdp) system, which catalyzes the hydrolysis of ATP coupled with the electrogenic transport of potassium into the cytoplasm. This subunit binds the extracellular potassium ions and delivers the ions to the membrane domain of KdpB through an intramembrane tunnel. This Mycobacterium bovis (strain ATCC BAA-935 / AF2122/97) protein is Potassium-transporting ATPase potassium-binding subunit.